Here is a 1575-residue protein sequence, read N- to C-terminus: Ras GTPase-activating-like protein IQGAP2 (1575 aa).

The residue at position 16 (serine 16) is a Phosphoserine. In terms of domain architecture, Calponin-homology (CH) spans leucine 41–leucine 156. Phosphothreonine is present on threonine 356. The region spanning glutamate 594–leucine 627 is the WW domain. 2 positions are modified to phosphoserine: serine 595 and serine 599. IQ domains lie at glutamine 690–glycine 719, asparagine 720–aspartate 749, and histidine 750–proline 779. Threonine 782, threonine 881, threonine 1002, and threonine 1269 each carry phosphothreonine. Positions tyrosine 933–alanine 1182 constitute a Ras-GAP domain. Residues serine 1279 and serine 1461 each carry the phosphoserine modification.

In terms of biological role, binds to activated CDC42 and RAC1 but does not seem to stimulate their GTPase activity. Associates with calmodulin. The polypeptide is Ras GTPase-activating-like protein IQGAP2 (Iqgap2) (Mus musculus (Mouse)).